We begin with the raw amino-acid sequence, 500 residues long: Intracellular exo-alpha-(1-&gt;5)-L-arabinofuranosidase (500 aa).

Residues Glu-28, Asn-73, and Asn-173 each coordinate alpha-L-arabinofuranose. Glu-174 serves as the catalytic Proton donor/acceptor. Alpha-L-arabinofuranose contacts are provided by Tyr-245, Glu-293, and Gln-350. Glu-293 functions as the Nucleophile in the catalytic mechanism.

This sequence belongs to the glycosyl hydrolase 51 family. As to quaternary structure, homohexamer; trimer of dimers.

It localises to the cytoplasm. It catalyses the reaction Hydrolysis of terminal non-reducing alpha-L-arabinofuranoside residues in alpha-L-arabinosides.. The protein operates within glycan metabolism; L-arabinan degradation. In terms of biological role, involved in the degradation of arabinan and is a key enzyme in the complete degradation of the plant cell wall. Catalyzes the cleavage of terminal alpha-(1-&gt;5)-arabinofuranosyl bonds in different hemicellulosic homopolysaccharides (branched and debranched arabinans). This Halalkalibacterium halodurans (strain ATCC BAA-125 / DSM 18197 / FERM 7344 / JCM 9153 / C-125) (Bacillus halodurans) protein is Intracellular exo-alpha-(1-&gt;5)-L-arabinofuranosidase (abfA).